Reading from the N-terminus, the 617-residue chain is Proline--tRNA ligase (617 aa).

The protein belongs to the class-II aminoacyl-tRNA synthetase family. ProS type 1 subfamily. Homodimer.

Its subcellular location is the cytoplasm. It carries out the reaction tRNA(Pro) + L-proline + ATP = L-prolyl-tRNA(Pro) + AMP + diphosphate. Catalyzes the attachment of proline to tRNA(Pro) in a two-step reaction: proline is first activated by ATP to form Pro-AMP and then transferred to the acceptor end of tRNA(Pro). As ProRS can inadvertently accommodate and process non-cognate amino acids such as alanine and cysteine, to avoid such errors it has two additional distinct editing activities against alanine. One activity is designated as 'pretransfer' editing and involves the tRNA(Pro)-independent hydrolysis of activated Ala-AMP. The other activity is designated 'posttransfer' editing and involves deacylation of mischarged Ala-tRNA(Pro). The misacylated Cys-tRNA(Pro) is not edited by ProRS. The polypeptide is Proline--tRNA ligase (Treponema pallidum (strain Nichols)).